A 66-amino-acid polypeptide reads, in one-letter code: Large ribosomal subunit protein uL29 (66 aa).

This sequence belongs to the universal ribosomal protein uL29 family.

In Bartonella henselae (strain ATCC 49882 / DSM 28221 / CCUG 30454 / Houston 1) (Rochalimaea henselae), this protein is Large ribosomal subunit protein uL29.